The sequence spans 128 residues: Large ribosomal subunit protein uL22 (128 aa).

Belongs to the universal ribosomal protein uL22 family. In terms of assembly, part of the 50S ribosomal subunit.

In terms of biological role, this protein binds specifically to 23S rRNA; its binding is stimulated by other ribosomal proteins, e.g. L4, L17, and L20. It is important during the early stages of 50S assembly. It makes multiple contacts with different domains of the 23S rRNA in the assembled 50S subunit and ribosome. Its function is as follows. The globular domain of the protein is located near the polypeptide exit tunnel on the outside of the subunit, while an extended beta-hairpin is found that lines the wall of the exit tunnel in the center of the 70S ribosome. The polypeptide is Large ribosomal subunit protein uL22 (Rhodopseudomonas palustris (strain HaA2)).